The following is a 212-amino-acid chain: Peroxisomal membrane protein 4 (212 aa).

2 helical membrane passes run 97 to 117 (GETHQMHSFLAAFIGGLLLFG) and 153 to 173 (WDPFPLHTAVIWGLVLWLFEY). A glycan (N-linked (GlcNAc...) asparagine) is linked at Asn206.

It belongs to the peroxisomal membrane protein PXMP2/4 family. As to quaternary structure, interacts with PEX19.

The protein resides in the peroxisome membrane. This is Peroxisomal membrane protein 4 (Pxmp4) from Mus musculus (Mouse).